The following is a 188-amino-acid chain: Crossover junction endodeoxyribonuclease RuvC (188 aa).

Residues D7, E68, and D141 contribute to the active site. Positions 7, 68, and 141 each coordinate Mg(2+).

This sequence belongs to the RuvC family. As to quaternary structure, homodimer which binds Holliday junction (HJ) DNA. The HJ becomes 2-fold symmetrical on binding to RuvC with unstacked arms; it has a different conformation from HJ DNA in complex with RuvA. In the full resolvosome a probable DNA-RuvA(4)-RuvB(12)-RuvC(2) complex forms which resolves the HJ. Requires Mg(2+) as cofactor.

The protein resides in the cytoplasm. It carries out the reaction Endonucleolytic cleavage at a junction such as a reciprocal single-stranded crossover between two homologous DNA duplexes (Holliday junction).. The RuvA-RuvB-RuvC complex processes Holliday junction (HJ) DNA during genetic recombination and DNA repair. Endonuclease that resolves HJ intermediates. Cleaves cruciform DNA by making single-stranded nicks across the HJ at symmetrical positions within the homologous arms, yielding a 5'-phosphate and a 3'-hydroxyl group; requires a central core of homology in the junction. The consensus cleavage sequence is 5'-(A/T)TT(C/G)-3'. Cleavage occurs on the 3'-side of the TT dinucleotide at the point of strand exchange. HJ branch migration catalyzed by RuvA-RuvB allows RuvC to scan DNA until it finds its consensus sequence, where it cleaves and resolves the cruciform DNA. The chain is Crossover junction endodeoxyribonuclease RuvC from Mycobacterium leprae (strain TN).